A 319-amino-acid chain; its full sequence is 3-oxoacyl-[acyl-carrier-protein] reductase, chloroplastic (319 aa).

The transit peptide at 1 to 57 (MAAAVAAPRLISLKAVAKLGFREISQIRQLAPLHSAIPHFGMLRCRSRQPFSTSVVK) directs the protein to the chloroplast. An N-acetylalanine modification is found at alanine 58. Residue 81–105 (ITGASRGIGKAIALALGKAGCKVLV) participates in NADP(+) binding. Position 213 (serine 213) interacts with substrate. The active-site Proton acceptor is the tyrosine 226.

This sequence belongs to the short-chain dehydrogenases/reductases (SDR) family. In terms of assembly, homotetramer.

Its subcellular location is the plastid. The protein localises to the chloroplast. The enzyme catalyses a (3R)-hydroxyacyl-[ACP] + NADP(+) = a 3-oxoacyl-[ACP] + NADPH + H(+). Its pathway is lipid metabolism; fatty acid biosynthesis. The polypeptide is 3-oxoacyl-[acyl-carrier-protein] reductase, chloroplastic (Arabidopsis thaliana (Mouse-ear cress)).